The primary structure comprises 257 residues: NAD-capped RNA hydrolase NudC (257 aa).

Residues K25 and R69 each coordinate substrate. Positions 98 and 101 each coordinate Zn(2+). Substrate is bound at residue E111. Zn(2+) is bound by residues C116 and C119. Residue Y124 participates in substrate binding. The Nudix hydrolase domain occupies 125-248; that stretch reads PQIAPCIIVA…TVARRLIEDT (124 aa). Positions 158, 174, and 178 each coordinate a divalent metal cation. A Nudix box motif is present at residues 159–180; that stretch reads GFVEVGETLEQAVAREVMEESG. 192-199 contacts substrate; it reads QPWPFPQS. E219 contacts a divalent metal cation. A241 contacts substrate.

Belongs to the Nudix hydrolase family. NudC subfamily. Homodimer. Requires Mg(2+) as cofactor. It depends on Mn(2+) as a cofactor. The cofactor is Zn(2+).

The enzyme catalyses a 5'-end NAD(+)-phospho-ribonucleoside in mRNA + H2O = a 5'-end phospho-adenosine-phospho-ribonucleoside in mRNA + beta-nicotinamide D-ribonucleotide + 2 H(+). It catalyses the reaction NAD(+) + H2O = beta-nicotinamide D-ribonucleotide + AMP + 2 H(+). It carries out the reaction NADH + H2O = reduced beta-nicotinamide D-ribonucleotide + AMP + 2 H(+). Functionally, mRNA decapping enzyme that specifically removes the nicotinamide adenine dinucleotide (NAD) cap from a subset of mRNAs by hydrolyzing the diphosphate linkage to produce nicotinamide mononucleotide (NMN) and 5' monophosphate mRNA. The NAD-cap is present at the 5'-end of some mRNAs and stabilizes RNA against 5'-processing. Has preference for mRNAs with a 5'-end purine. Catalyzes the hydrolysis of a broad range of dinucleotide pyrophosphates. This is NAD-capped RNA hydrolase NudC from Shigella boydii serotype 18 (strain CDC 3083-94 / BS512).